A 159-amino-acid chain; its full sequence is Phosphopantetheine adenylyltransferase (159 aa).

Serine 8 is a substrate binding site. Residues 8 to 9 (SF) and histidine 16 each bind ATP. Residues lysine 40, threonine 72, and arginine 86 each coordinate substrate. ATP-binding positions include 87–89 (GLR), glutamate 97, and 122–128 (YSFLSSS).

Belongs to the bacterial CoaD family. As to quaternary structure, homohexamer. It depends on Mg(2+) as a cofactor.

It is found in the cytoplasm. The catalysed reaction is (R)-4'-phosphopantetheine + ATP + H(+) = 3'-dephospho-CoA + diphosphate. It participates in cofactor biosynthesis; coenzyme A biosynthesis; CoA from (R)-pantothenate: step 4/5. Functionally, reversibly transfers an adenylyl group from ATP to 4'-phosphopantetheine, yielding dephospho-CoA (dPCoA) and pyrophosphate. The chain is Phosphopantetheine adenylyltransferase from Synechocystis sp. (strain ATCC 27184 / PCC 6803 / Kazusa).